The primary structure comprises 146 residues: Cytidine deaminase (146 aa).

Residues 13–140 form the CMP/dCMP-type deaminase domain; the sequence is EHVQRLLLSS…ELLPASFGPE (128 aa). 54-56 serves as a coordination point for substrate; sequence NIE. Position 65 (Cys65) interacts with Zn(2+). Residue Glu67 is the Proton donor of the active site. Residues Cys99 and Cys102 each contribute to the Zn(2+) site.

This sequence belongs to the cytidine and deoxycytidylate deaminase family. As to quaternary structure, homotetramer. Zn(2+) is required as a cofactor.

It carries out the reaction cytidine + H2O + H(+) = uridine + NH4(+). The enzyme catalyses 2'-deoxycytidine + H2O + H(+) = 2'-deoxyuridine + NH4(+). Its function is as follows. This enzyme scavenges exogenous and endogenous cytidine and 2'-deoxycytidine for UMP synthesis. The sequence is that of Cytidine deaminase (Cda) from Mus musculus (Mouse).